A 258-amino-acid polypeptide reads, in one-letter code: Hydroxyacylglutathione hydrolase (258 aa).

Zn(2+)-binding residues include His52, His54, Asp56, His57, His109, Asp126, and His164.

Belongs to the metallo-beta-lactamase superfamily. Glyoxalase II family. In terms of assembly, monomer. Zn(2+) serves as cofactor.

The catalysed reaction is an S-(2-hydroxyacyl)glutathione + H2O = a 2-hydroxy carboxylate + glutathione + H(+). It functions in the pathway secondary metabolite metabolism; methylglyoxal degradation; (R)-lactate from methylglyoxal: step 2/2. Its function is as follows. Thiolesterase that catalyzes the hydrolysis of S-D-lactoyl-glutathione to form glutathione and D-lactic acid. This Xylella fastidiosa (strain 9a5c) protein is Hydroxyacylglutathione hydrolase.